We begin with the raw amino-acid sequence, 385 residues long: 1-deoxy-D-xylulose 5-phosphate reductoisomerase 1 (385 aa).

Residues T11, G12, S13, I14, N39, and N122 each coordinate NADPH. K123 lines the 1-deoxy-D-xylulose 5-phosphate pocket. E124 lines the NADPH pocket. D148 contacts Mn(2+). 1-deoxy-D-xylulose 5-phosphate is bound by residues S149, E150, S174, and H197. E150 serves as a coordination point for Mn(2+). An NADPH-binding site is contributed by G203. 4 residues coordinate 1-deoxy-D-xylulose 5-phosphate: S210, N215, K216, and E219. E219 serves as a coordination point for Mn(2+).

It belongs to the DXR family. Requires Mg(2+) as cofactor. It depends on Mn(2+) as a cofactor.

The catalysed reaction is 2-C-methyl-D-erythritol 4-phosphate + NADP(+) = 1-deoxy-D-xylulose 5-phosphate + NADPH + H(+). The protein operates within isoprenoid biosynthesis; isopentenyl diphosphate biosynthesis via DXP pathway; isopentenyl diphosphate from 1-deoxy-D-xylulose 5-phosphate: step 1/6. In terms of biological role, catalyzes the NADPH-dependent rearrangement and reduction of 1-deoxy-D-xylulose-5-phosphate (DXP) to 2-C-methyl-D-erythritol 4-phosphate (MEP). The protein is 1-deoxy-D-xylulose 5-phosphate reductoisomerase 1 of Bacillus anthracis.